We begin with the raw amino-acid sequence, 344 residues long: UDP-3-O-acylglucosamine N-acyltransferase (344 aa).

The Proton acceptor role is filled by His248.

Belongs to the transferase hexapeptide repeat family. LpxD subfamily. In terms of assembly, homotrimer.

It catalyses the reaction a UDP-3-O-[(3R)-3-hydroxyacyl]-alpha-D-glucosamine + a (3R)-hydroxyacyl-[ACP] = a UDP-2-N,3-O-bis[(3R)-3-hydroxyacyl]-alpha-D-glucosamine + holo-[ACP] + H(+). It functions in the pathway bacterial outer membrane biogenesis; LPS lipid A biosynthesis. In terms of biological role, catalyzes the N-acylation of UDP-3-O-acylglucosamine using 3-hydroxyacyl-ACP as the acyl donor. Is involved in the biosynthesis of lipid A, a phosphorylated glycolipid that anchors the lipopolysaccharide to the outer membrane of the cell. This chain is UDP-3-O-acylglucosamine N-acyltransferase, found in Synechocystis sp. (strain ATCC 27184 / PCC 6803 / Kazusa).